The primary structure comprises 396 residues: Phosphoglycerate kinase (396 aa).

Substrate contacts are provided by residues 21–23 (DFN), Arg-36, 59–62 (HLGK), Arg-119, and Arg-156. Residues Lys-206, Glu-325, and 352-355 (GGDS) contribute to the ATP site.

The protein belongs to the phosphoglycerate kinase family. As to quaternary structure, monomer.

The protein localises to the cytoplasm. The catalysed reaction is (2R)-3-phosphoglycerate + ATP = (2R)-3-phospho-glyceroyl phosphate + ADP. It functions in the pathway carbohydrate degradation; glycolysis; pyruvate from D-glyceraldehyde 3-phosphate: step 2/5. This Staphylococcus epidermidis (strain ATCC 35984 / DSM 28319 / BCRC 17069 / CCUG 31568 / BM 3577 / RP62A) protein is Phosphoglycerate kinase.